A 355-amino-acid polypeptide reads, in one-letter code: Protein ECERIFERUM 16 (355 aa).

2 disordered regions span residues 1–60 and 296–315; these read MDSK…LPSN and HSSTEQFNKPGNPSDQKIHM. The span at 7 to 28 shows a compositional bias: basic residues; sequence AKSKRAHTLHHSKKSHSVHKPK. Composition is skewed to polar residues over residues 41–53 and 296–310; these read QGNQTKSPVQSRR and HSSTEQFNKPGNPSD.

In terms of assembly, interacts with RST1. Expressed in taproots, lateral roots, root tips, leaf veins, cauline leaves, inflorescences, flowers, and siliques.

It is found in the cytoplasm. It localises to the cytosol. The protein localises to the endoplasmic reticulum. Functionally, together with RST1, acts as a cofactor of the cytoplasmic exosome and connects the cytosolic RNA exosome to the SKI complex. Acts as a post-transcriptional gene silencing (PTGS) suppressor. CER16/RIPR can, like RST1 suppress the production of small interfering RNAs (siRNAs) from the CER3 locus, which is involved in cuticule membrane and wax production, and in the typhine and sporopollenin biosynthesis of pollen. The chain is Protein ECERIFERUM 16 from Arabidopsis thaliana (Mouse-ear cress).